The following is a 66-amino-acid chain: Large ribosomal subunit protein bL31 (66 aa).

Residues C16, C18, C36, and C39 each contribute to the Zn(2+) site.

This sequence belongs to the bacterial ribosomal protein bL31 family. Type A subfamily. In terms of assembly, part of the 50S ribosomal subunit during exponential growth. The cofactor is Zn(2+).

In terms of biological role, binds the 23S rRNA. Functionally, while neither of the L31 paralogs is essential, this protein seems to function as the main L31 protein. Has a lower affinity for 70S ribosomes than the non-zinc-containing paralog L31B (ytiA); is displaced by it to varying extents, even under zinc-replete conditions. The protein is Large ribosomal subunit protein bL31 (rpmE) of Bacillus subtilis (strain 168).